The following is a 333-amino-acid chain: Gap junction alpha-4 protein (333 aa).

Over 1–20 (MGDWGFLEKLLDQVQEHSTV) the chain is Cytoplasmic. Residues 21–40 (VGKIWLTVLFIFRILILGLA) traverse the membrane as a helical segment. The Extracellular segment spans residues 41–76 (GESVWGDEQSDFECNTAQPGCTNVCYDQAFPISHIR). The helical transmembrane segment at 77-99 (YWVLQFLFVSTPTLIYLGHVIYL) threads the bilayer. The Cytoplasmic portion of the chain corresponds to 100–148 (SRREERLRQKEGELRALPSKDLHVERALAAIEHQMAKISVAEDGRLRIR). The chain crosses the membrane as a helical span at residues 149–171 (GALMGTYVVSVLCKSVLEAGFLY). Residues 172 to 208 (GQWRLYGWTMEPVFVCQRAPCPHIVDCYVSRPTEKTI) are Extracellular-facing. A helical transmembrane segment spans residues 209–231 (FIIFMLVVGVISLVLNLLELVHL). Over 232 to 333 (LCRCVSREIK…NSSASKKQYV (102 aa)) the chain is Cytoplasmic. A disordered region spans residues 292-333 (ANLTTEERLTSSRPPPFVNTAPQGGRKSPSRPNSSASKKQYV). The segment covering 321-333 (SRPNSSASKKQYV) has biased composition (polar residues).

Belongs to the connexin family. Alpha-type (group II) subfamily. As to quaternary structure, a connexon is composed of a hexamer of connexins. As to expression, highly expressed in lung.

It localises to the cell membrane. It is found in the cell junction. Its subcellular location is the gap junction. Functionally, one gap junction consists of a cluster of closely packed pairs of transmembrane channels, the connexons, through which materials of low MW diffuse from one cell to a neighboring cell. The polypeptide is Gap junction alpha-4 protein (Gja4) (Mus musculus (Mouse)).